A 1175-amino-acid chain; its full sequence is Pyruvate carboxylase 1 (1175 aa).

The Biotin carboxylation domain maps to 31 to 481 (EFNKVMVANR…DTYFIDEHPE (451 aa)). K147, E231, and H266 together coordinate ATP. An ATP-grasp domain is found at 151–348 (RQAAIEAGVQ…LVQAQIRIAE (198 aa)). R323 is an active-site residue. Residues 559 to 828 (CMITDTTFRD…DTGLSLDDIS (270 aa)) enclose the Pyruvate carboxyltransferase domain. Residues 567 to 571 (RDAHQ) and R640 contribute to the substrate site. D568 provides a ligand contact to a divalent metal cation. A divalent metal cation is bound by residues K737, H767, and H769. Position 737 is an N6-carboxylysine (K737). T904 provides a ligand contact to substrate. Residues 1099–1174 (RALPGVRGHI…SAGDLVVEVE (76 aa)) form the Biotinyl-binding domain. N6-biotinyllysine is present on K1140.

In terms of assembly, interacts with sir-2.2 and sir-2.3. The cofactor is biotin. Zn(2+) serves as cofactor.

The protein resides in the cytoplasm. The enzyme catalyses hydrogencarbonate + pyruvate + ATP = oxaloacetate + ADP + phosphate + H(+). It functions in the pathway carbohydrate biosynthesis; gluconeogenesis. Pyruvate carboxylase catalyzes a 2-step reaction, involving the ATP-dependent carboxylation of the covalently attached biotin in the first step and the transfer of the carboxyl group to pyruvate in the second. The chain is Pyruvate carboxylase 1 from Caenorhabditis elegans.